A 782-amino-acid polypeptide reads, in one-letter code: Gelsolin (782 aa).

The N-terminal stretch at 1–27 (MAPHRPAPALLCALSLALCALSLPVRA) is a signal peptide. Residues 53-176 (VVEHPEFLKA…YKKGGVASGF (124 aa)) are actin-severing. A Gelsolin-like 1 repeat occupies 76 to 158 (FDLVPVPTNL…VQGFESATFL (83 aa)). Tyr-86 is modified (phosphotyrosine; by SRC; in vitro). Gly-92, Asp-93, Glu-124, Asp-136, Gly-141, and Ala-143 together coordinate Ca(2+). Positions 123–126 (DESG) are actin-actin interfilament contact point. Residue 162–169 (KSGLKYKK) participates in a 1,2-diacyl-sn-glycero-3-phospho-(1D-myo-inositol-4,5-bisphosphate) binding. Ca(2+) is bound at residue Val-172. An a 1,2-diacyl-sn-glycero-3-phospho-(1D-myo-inositol-4,5-bisphosphate)-binding site is contributed by 188–196 (RLFQVKGRR). One copy of the Gelsolin-like 2 repeat lies at 198 to 270 (VRATEVPVSW…SEEGTEPEAM (73 aa)). 2 residues coordinate Ca(2+): Gly-213 and Asp-214. Cys-215 and Cys-228 form a disulfide bridge. Glu-236 is a Ca(2+) binding site. Positions 247 to 262 (IRDNERSGRARVHVSE) are enriched in basic and acidic residues. The segment at 247-285 (IRDNERSGRARVHVSEEGTEPEAMLQVLGPKPALPAGTE) is disordered. Ca(2+) contacts are provided by Asp-286, Glu-329, Asp-330, and Glu-354. A Gelsolin-like 3 repeat occupies 317-389 (DENPFAQGAL…LPEGGETPLF (73 aa)). Tyr-409 bears the Phosphotyrosine; by SRC; in vitro mark. The interval 434–782 (AAQHGMDDDG…LDRAMAELAA (349 aa)) is actin-binding, Ca-sensitive. Residues 455 to 536 (SNKVPVDPAT…VQGKEPAHLM (82 aa)) form a Gelsolin-like 4 repeat. Tyr-465 is subject to Phosphotyrosine; by SRC. 7 residues coordinate Ca(2+): Gly-471, Asp-472, Glu-502, Asp-514, Gly-519, Pro-521, and Thr-551. Residues 576-642 (TRAVEVLPKA…AEGSEPDGFW (67 aa)) form a Gelsolin-like 5 repeat. Position 584 is an N6-acetyllysine (Lys-584). Ca(2+) contacts are provided by Asn-591 and Asp-592. Tyr-603 is subject to Phosphotyrosine; by SRC; in vitro. Glu-614 contacts Ca(2+). The residue at position 651 (Tyr-651) is a Phosphotyrosine; by SRC; in vitro. One copy of the Gelsolin-like 6 repeat lies at 681–756 (IEEVPGELMQ…VKQGFEPPSF (76 aa)). Positions 696, 697, and 719 each coordinate Ca(2+). Thr-742 is modified (phosphothreonine).

This sequence belongs to the villin/gelsolin family. Binds to actin and to fibronectin. Identified in a complex composed of ACTA1, COBL, GSN and TMSB4X. Interacts with the inactive form of EIF2AK2/PKR. Interacts with FLII. Phosphorylation on Tyr-86, Tyr-409, Tyr-465, Tyr-603 and Tyr-651 in vitro is induced in presence of phospholipids. Phagocytic cells, platelets, fibroblasts, nonmuscle cells, smooth and skeletal muscle cells.

The protein resides in the cytoplasm. The protein localises to the cytoskeleton. It localises to the secreted. In terms of biological role, calcium-regulated, actin-modulating protein that binds to the plus (or barbed) ends of actin monomers or filaments, preventing monomer exchange (end-blocking or capping). It can promote the assembly of monomers into filaments (nucleation) as well as sever filaments already formed. Plays a role in ciliogenesis. The chain is Gelsolin (GSN) from Homo sapiens (Human).